The sequence spans 336 residues: 3-isopropylmalate dehydrogenase (336 aa).

Substrate is bound by residues Arg86, Arg96, Arg117, and Asp201. Residues Asp201, Asp225, and Asp229 each contribute to the Mg(2+) site. 258-270 lines the NAD(+) pocket; the sequence is GAAFDIAGKGIAN.

This sequence belongs to the isocitrate and isopropylmalate dehydrogenases family. Homotetramer. It depends on Mg(2+) as a cofactor. Mn(2+) is required as a cofactor.

It localises to the cytoplasm. The catalysed reaction is (2R,3S)-3-isopropylmalate + NAD(+) = 4-methyl-2-oxopentanoate + CO2 + NADH. It participates in amino-acid biosynthesis; L-leucine biosynthesis; L-leucine from 3-methyl-2-oxobutanoate: step 3/4. Functionally, catalyzes the oxidation of 3-carboxy-2-hydroxy-4-methylpentanoate (3-isopropylmalate) to 3-carboxy-4-methyl-2-oxopentanoate. The product decarboxylates to 4-methyl-2 oxopentanoate. In Saccharolobus solfataricus (strain ATCC 35092 / DSM 1617 / JCM 11322 / P2) (Sulfolobus solfataricus), this protein is 3-isopropylmalate dehydrogenase (leuB).